The primary structure comprises 263 residues: ATP synthase subunit a (263 aa).

6 consecutive transmembrane segments (helical) span residues 26–46 (VHLDTLFFSLVAGATFLFFFS), 86–106 (VAPLALTVFCWVFVMNAIDLI), 130–150 (DISATLGMAICVFCLIIFYTI), 166–186 (PFNHWAFIPVNFVLEIVTLLA), 195–215 (LFGNMYAGELIFILIAVMYMA), and 229–249 (LAWAIFHILVITLQAFIFMML).

The protein belongs to the ATPase A chain family. In terms of assembly, F-type ATPases have 2 components, CF(1) - the catalytic core - and CF(0) - the membrane proton channel. CF(1) has five subunits: alpha(3), beta(3), gamma(1), delta(1), epsilon(1). CF(0) has three main subunits: a(1), b(2) and c(9-12). The alpha and beta chains form an alternating ring which encloses part of the gamma chain. CF(1) is attached to CF(0) by a central stalk formed by the gamma and epsilon chains, while a peripheral stalk is formed by the delta and b chains.

The protein localises to the cell inner membrane. Its function is as follows. Key component of the proton channel; it plays a direct role in the translocation of protons across the membrane. This Glaesserella parasuis serovar 5 (strain SH0165) (Haemophilus parasuis) protein is ATP synthase subunit a.